We begin with the raw amino-acid sequence, 359 residues long: Protein RecA (359 aa).

74-81 (GPESSGKT) is an ATP binding site.

This sequence belongs to the RecA family.

It is found in the cytoplasm. In terms of biological role, can catalyze the hydrolysis of ATP in the presence of single-stranded DNA, the ATP-dependent uptake of single-stranded DNA by duplex DNA, and the ATP-dependent hybridization of homologous single-stranded DNAs. It interacts with LexA causing its activation and leading to its autocatalytic cleavage. This chain is Protein RecA, found in Anaplasma marginale (strain Florida).